A 166-amino-acid polypeptide reads, in one-letter code: Small ribosomal subunit protein uS5 (166 aa).

Residues 11-74 (LQEKLIAVNR…EKARRNMINV (64 aa)) enclose the S5 DRBM domain.

This sequence belongs to the universal ribosomal protein uS5 family. In terms of assembly, part of the 30S ribosomal subunit. Contacts proteins S4 and S8.

Its function is as follows. With S4 and S12 plays an important role in translational accuracy. In terms of biological role, located at the back of the 30S subunit body where it stabilizes the conformation of the head with respect to the body. This Cronobacter sakazakii (strain ATCC BAA-894) (Enterobacter sakazakii) protein is Small ribosomal subunit protein uS5.